The following is a 106-amino-acid chain: MKIALICSVFLVCLAYTWADEDVCSLPMNDGLCRALHKRYYYDSATKTCKMFYYGGCAGNANNFETKRACAEKCYKNKALIKTRKRKPKKKKNNKESSEMTIINMD.

The signal sequence occupies residues 1-19; that stretch reads MKIALICSVFLVCLAYTWA. One can recognise a BPTI/Kunitz inhibitor domain in the interval 24–74; sequence CSLPMNDGLCRALHKRYYYDSATKTCKMFYYGGCAGNANNFETKRACAEKC. Cystine bridges form between cysteine 24–cysteine 74, cysteine 33–cysteine 57, and cysteine 49–cysteine 70. Residues 84–93 are compositionally biased toward basic residues; sequence RKRKPKKKKN. The disordered stretch occupies residues 84–106; that stretch reads RKRKPKKKKNNKESSEMTIINMD.

Belongs to the venom Kunitz-type family. In terms of assembly, monomer. Interacts with mouse, bovine and human coagulation factor X (F10) (activated). Interacts with human coagulation factor XI (F11) (activated). Interacts with human coagulation factor IX (F9) (activated). Interacts with host plasmin (PLG). Interacts with host kallikrein. As to expression, female salivary gland (at protein level).

Its subcellular location is the secreted. Salivary anticoagulant that targets host coagulation factor Xa (F10). Blocks activity of host prothrombinase (F10-F5). Inhibits factor Xa-mediated acute inflammation in the host. Inhibits other host proteases involved in blood coagulation and inflammation: cathepsin G (CTSG), kallikrein, trypsin, alpha-chymotrypsin, beta-tryptase, plasmin (PLG), elastase, proteinase 3 (PRTN3) and coagulation factor XIa (F11). Inhibits lipopolysaccharide-induced procoagulant effect in human endothelial cells. Inhibits Xa-mediated cleavage of protease-activated receptor 2 (PAR-2/F2RL1) in the host. This chain is Guianensin, found in Simulium guianense (Black fly).